A 373-amino-acid polypeptide reads, in one-letter code: PqqA peptide cyclase (373 aa).

A Radical SAM core domain is found at 7–227; it reads ILNPVGLLAE…EVYAGVIVID (221 aa). 3 residues coordinate [4Fe-4S] cluster: C21, C25, and C28.

It belongs to the radical SAM superfamily. PqqE family. As to quaternary structure, interacts with PqqD. The interaction is necessary for activity of PqqE. The cofactor is [4Fe-4S] cluster.

The catalysed reaction is [PQQ precursor protein] + S-adenosyl-L-methionine = E-Y cross-linked-[PQQ precursor protein] + 5'-deoxyadenosine + L-methionine + H(+). It participates in cofactor biosynthesis; pyrroloquinoline quinone biosynthesis. Catalyzes the cross-linking of a glutamate residue and a tyrosine residue in the PqqA protein as part of the biosynthesis of pyrroloquinoline quinone (PQQ). This chain is PqqA peptide cyclase, found in Methylocella silvestris (strain DSM 15510 / CIP 108128 / LMG 27833 / NCIMB 13906 / BL2).